The primary structure comprises 303 residues: Aquaporin-7 (303 aa).

Residues 1-21 (MAPRSVLETIQSVLQKNMVRE) lie on the Cytoplasmic side of the membrane. Ser-5 carries the phosphoserine modification. The chain crosses the membrane as a helical span at residues 22–39 (FLAEFLSTYVMMVFGLGS). Topologically, residues 40 to 52 (VAHMVLGENSGSY) are extracellular. A helical membrane pass occupies residues 53–70 (LGVNLGFGFGVTMGVHVA). At 71-74 (GGIS) the chain is on the cytoplasmic side. An intramembrane region (discontinuously helical) is located at residues 75-88 (GAHMNAAVTFTNCA). Residues 79 to 81 (NAA) carry the NPA 1 motif. The Cytoplasmic portion of the chain corresponds to 89–96 (LGRMTWKK). Residues 97–117 (FPVYVLGQFLGSFSAAATTYL) form a helical membrane-spanning segment. The Extracellular segment spans residues 118 to 152 (IFYGAINHFAGGDLLVTGSKATANIFATYLPEYMT). The helical transmembrane segment at 153-173 (LWRGFLDEAFVTGMLQLCLFA) threads the bilayer. Residues 174 to 185 (ITDKKNSPALQG) lie on the Cytoplasmic side of the membrane. A helical transmembrane segment spans residues 186–202 (TEPLVIGILVTVLGVSL). Residues 203 to 206 (GMNS) are Extracellular-facing. The discontinuously helical intramembrane region spans 207–220 (GYAINPSRDLPPRL). The NPA 2 signature appears at 211–213 (NPS). The Extracellular segment spans residues 221–238 (FTFIAGWGKQVFRAGNNW). A helical transmembrane segment spans residues 239-260 (WWVPVVAPLLGAYLGGIVYLGL). Topologically, residues 261-303 (IHPSIPQDPQRLENFTARDQKVTASYKNAASANISGSVPLEHF) are cytoplasmic.

The protein belongs to the MIP/aquaporin (TC 1.A.8) family. In terms of assembly, homotetramer; each monomer provides an independent glycerol/water pore. Two homotetramers on opposing membranes can dimerize, forming a cell-cell junction. Interacts with PLIN1. Phosphorylation by PKA could prevent the interaction with PLIN1. In terms of tissue distribution, detected in proximal tubules in kidney. Detected in the capillary network between muscle fibers in skeletal muscle and heart, and in spermatids and on spermatozoa tails in testis and epididymis. Detected in white and brown adipose tissue, especially on small blood vessels (at protein level). Detected in kidney and white adipose tissue.

The protein localises to the cell membrane. Its subcellular location is the cytoplasmic vesicle membrane. It is found in the lipid droplet. The catalysed reaction is glycerol(in) = glycerol(out). It carries out the reaction H2O(in) = H2O(out). It catalyses the reaction urea(in) = urea(out). With respect to regulation, glycerol transport is regulated by pH, with the porin being permeable to glycerol at pH 7.4 but not at pH 5.5. Water permeability, however, is not influenced by pH. Its function is as follows. Aquaglyceroporins form homotetrameric transmembrane channels, with each monomer independently mediating glycerol and water transport across the plasma membrane along their osmotic gradient. Could also be permeable to urea. Mediates the efflux of glycerol, formed upon triglyceride hydrolysis, to avoid its accumulation in adipocytes and to make it available to other tissues. In the kidney, mediates the reabsorption of glycerol, preventing its loss in urine, again participating to energy homeostasis. In pancreatic beta cells, it also mediates the efflux of glycerol, regulating its intracellular levels. This is Aquaporin-7 from Mus musculus (Mouse).